We begin with the raw amino-acid sequence, 123 residues long: UPF0102 protein CLJ_B2665 (123 aa).

This sequence belongs to the UPF0102 family.

The polypeptide is UPF0102 protein CLJ_B2665 (Clostridium botulinum (strain 657 / Type Ba4)).